Reading from the N-terminus, the 225-residue chain is Ribulose-phosphate 3-epimerase (225 aa).

Substrate is bound at residue Ser-9. A divalent metal cation-binding residues include His-34, Asp-36, and His-68. Asp-36 functions as the Proton acceptor in the catalytic mechanism. Residues His-68, 144–147 (GFGG), 177–179 (DGG), and 199–200 (GS) contribute to the substrate site. Asp-177 contributes to the a divalent metal cation binding site. Asp-177 serves as the catalytic Proton donor.

The protein belongs to the ribulose-phosphate 3-epimerase family. A divalent metal cation serves as cofactor.

The catalysed reaction is D-ribulose 5-phosphate = D-xylulose 5-phosphate. The protein operates within carbohydrate degradation. Catalyzes the reversible epimerization of D-ribulose 5-phosphate to D-xylulose 5-phosphate. The protein is Ribulose-phosphate 3-epimerase of Escherichia coli O157:H7.